The sequence spans 338 residues: Heat-inducible transcription repressor HrcA (338 aa).

The protein belongs to the HrcA family.

Its function is as follows. Negative regulator of class I heat shock genes (grpE-dnaK-dnaJ and groELS operons). Prevents heat-shock induction of these operons. The chain is Heat-inducible transcription repressor HrcA from Bacillus anthracis (strain A0248).